The primary structure comprises 431 residues: Peroxisomal biogenesis factor 3 (431 aa).

Over 1 to 10 (MDFFRRHQKK) the chain is Peroxisomal. A helical transmembrane segment spans residues 11 to 28 (VLALVGVALSSYLFIDYV). At 29-431 (KKKFFEIQGR…VVYSSFDWAL (403 aa)) the chain is on the cytoplasmic side. The segment at 95–126 (TDRVLALESSTSSSATAQTVPTMTSGATEEGE) is disordered. The segment covering 112–121 (QTVPTMTSGA) has biased composition (polar residues).

This sequence belongs to the peroxin-3 family.

It localises to the peroxisome membrane. Functionally, involved in peroxisome biosynthesis. Seems to directly or indirectly sequesters components of the peroxisome biogenesis machinery. This Yarrowia lipolytica (strain CLIB 122 / E 150) (Yeast) protein is Peroxisomal biogenesis factor 3 (PEX3).